The sequence spans 146 residues: MEEKDNTLERQLCFLFYVSSKEIIKKYTSYLKEFDLTYTGYIVLLAIGVEEKLNIKTLGARVFLDSGTLTPLLKKLEKKGYVTRTREIDDERNLQIALTTKGKDIKEPLSNISKQVFNEFDMEVDEAIDLKETLQNFVNKHFQQNI.

One can recognise an HTH marR-type domain in the interval 9–139 (ERQLCFLFYV…LKETLQNFVN (131 aa)). A DNA-binding region (H-T-H motif) is located at residues 55-78 (IKTLGARVFLDSGTLTPLLKKLEK).

It belongs to the SarZ family.

It is found in the cytoplasm. The sequence is that of HTH-type transcriptional regulator SarZ (sarZ) from Staphylococcus saprophyticus subsp. saprophyticus (strain ATCC 15305 / DSM 20229 / NCIMB 8711 / NCTC 7292 / S-41).